The sequence spans 319 residues: ATP-dependent 6-phosphofructokinase (319 aa).

ATP is bound at residue glycine 11. An ADP-binding site is contributed by 21 to 25 (RAVTR). ATP is bound by residues 72 to 73 (RF) and 102 to 105 (GDGS). Residue aspartate 103 coordinates Mg(2+). 125-127 (SID) provides a ligand contact to substrate. Aspartate 127 functions as the Proton acceptor in the catalytic mechanism. Arginine 154 provides a ligand contact to ADP. Substrate-binding positions include arginine 162 and 169-171 (MGR). Residues 185-187 (GAD) and 213-215 (KKH) contribute to the ADP site. Substrate is bound by residues glutamate 222, arginine 243, and 249–252 (HMQR).

Belongs to the phosphofructokinase type A (PFKA) family. ATP-dependent PFK group I subfamily. Prokaryotic clade 'B1' sub-subfamily. Homotetramer. The cofactor is Mg(2+).

It localises to the cytoplasm. The enzyme catalyses beta-D-fructose 6-phosphate + ATP = beta-D-fructose 1,6-bisphosphate + ADP + H(+). It functions in the pathway carbohydrate degradation; glycolysis; D-glyceraldehyde 3-phosphate and glycerone phosphate from D-glucose: step 3/4. Allosterically activated by ADP and other diphosphonucleosides, and allosterically inhibited by phosphoenolpyruvate. Functionally, catalyzes the phosphorylation of D-fructose 6-phosphate to fructose 1,6-bisphosphate by ATP, the first committing step of glycolysis. In Lactobacillus gasseri (strain ATCC 33323 / DSM 20243 / BCRC 14619 / CIP 102991 / JCM 1131 / KCTC 3163 / NCIMB 11718 / NCTC 13722 / AM63), this protein is ATP-dependent 6-phosphofructokinase.